The primary structure comprises 192 residues: A-type ATP synthase subunit E (192 aa).

This sequence belongs to the V-ATPase E subunit family. In terms of assembly, has multiple subunits with at least A(3), B(3), C, D, E, F, H, I and proteolipid K(x).

It is found in the cell membrane. Functionally, component of the A-type ATP synthase that produces ATP from ADP in the presence of a proton gradient across the membrane. The sequence is that of A-type ATP synthase subunit E from Metallosphaera sedula (strain ATCC 51363 / DSM 5348 / JCM 9185 / NBRC 15509 / TH2).